Consider the following 369-residue polypeptide: 4-hydroxy-3-methylbut-2-en-1-yl diphosphate synthase (flavodoxin) (369 aa).

[4Fe-4S] cluster-binding residues include C270, C273, C305, and E312.

Belongs to the IspG family. The cofactor is [4Fe-4S] cluster.

The catalysed reaction is (2E)-4-hydroxy-3-methylbut-2-enyl diphosphate + oxidized [flavodoxin] + H2O + 2 H(+) = 2-C-methyl-D-erythritol 2,4-cyclic diphosphate + reduced [flavodoxin]. It functions in the pathway isoprenoid biosynthesis; isopentenyl diphosphate biosynthesis via DXP pathway; isopentenyl diphosphate from 1-deoxy-D-xylulose 5-phosphate: step 5/6. Functionally, converts 2C-methyl-D-erythritol 2,4-cyclodiphosphate (ME-2,4cPP) into 1-hydroxy-2-methyl-2-(E)-butenyl 4-diphosphate. This chain is 4-hydroxy-3-methylbut-2-en-1-yl diphosphate synthase (flavodoxin), found in Pseudomonas putida (strain ATCC 700007 / DSM 6899 / JCM 31910 / BCRC 17059 / LMG 24140 / F1).